A 101-amino-acid polypeptide reads, in one-letter code: Small ribosomal subunit protein eS24 (101 aa).

It belongs to the eukaryotic ribosomal protein eS24 family.

This chain is Small ribosomal subunit protein eS24, found in Methanosarcina acetivorans (strain ATCC 35395 / DSM 2834 / JCM 12185 / C2A).